The sequence spans 502 residues: UDP-N-acetylglucosamine diphosphorylase 2 (502 aa).

The Substrate binding signature appears at 130 to 133 (LSGG). A substrate-binding site is contributed by asparagine 250. The short motif at 332–333 (EY) is the Substrate binding element. Lysine 429 lines the substrate pocket.

This sequence belongs to the UDPGP type 1 family. Monomer. It depends on Mg(2+) as a cofactor. Mn(2+) serves as cofactor. As to expression, expressed in root tips, stipules, lateral root primordia, immature anthers and at the branching points of the flowering shoots.

The protein resides in the cytoplasm. It carries out the reaction N-acetyl-alpha-D-glucosamine 1-phosphate + UTP + H(+) = UDP-N-acetyl-alpha-D-glucosamine + diphosphate. The catalysed reaction is N-acetyl-alpha-D-galactosamine 1-phosphate + UTP + H(+) = UDP-N-acetyl-alpha-D-galactosamine + diphosphate. The enzyme catalyses alpha-D-glucose 1-phosphate + UTP + H(+) = UDP-alpha-D-glucose + diphosphate. It participates in nucleotide-sugar biosynthesis; UDP-N-acetyl-alpha-D-glucosamine biosynthesis; UDP-N-acetyl-alpha-D-glucosamine from N-acetyl-alpha-D-glucosamine 1-phosphate: step 1/1. Uridylyltransferase involved in the biosynthesis of UDP-glucosamine, an essential precursor for glycoprotein and glycolipid synthesis. Can use UDP-glucosamine, the 4-epimer UDP-galactosamine and UDP-glucose as substrates. Acts redundantly with GLCNAC1PUT1. Required for gametogenesis and embryo development. In Arabidopsis thaliana (Mouse-ear cress), this protein is UDP-N-acetylglucosamine diphosphorylase 2 (GLCNAC1PUT2).